The primary structure comprises 591 residues: Aspartate--tRNA(Asp/Asn) ligase (591 aa).

Residue Glu-176 coordinates L-aspartate. Residues 200-203 (QLFK) are aspartate. L-aspartate is bound at residue Arg-222. ATP-binding positions include 222-224 (RDE) and Gln-231. His-450 contributes to the L-aspartate binding site. Glu-484 is an ATP binding site. Residue Arg-491 coordinates L-aspartate. Position 536 to 539 (536 to 539 (GLDR)) interacts with ATP.

This sequence belongs to the class-II aminoacyl-tRNA synthetase family. Type 1 subfamily. As to quaternary structure, homodimer.

It localises to the cytoplasm. The enzyme catalyses tRNA(Asx) + L-aspartate + ATP = L-aspartyl-tRNA(Asx) + AMP + diphosphate. Functionally, aspartyl-tRNA synthetase with relaxed tRNA specificity since it is able to aspartylate not only its cognate tRNA(Asp) but also tRNA(Asn). Reaction proceeds in two steps: L-aspartate is first activated by ATP to form Asp-AMP and then transferred to the acceptor end of tRNA(Asp/Asn). This Bacillus anthracis (strain A0248) protein is Aspartate--tRNA(Asp/Asn) ligase.